Reading from the N-terminus, the 189-residue chain is Cell division protein SepF (189 aa).

Disordered regions lie at residues 1–75 (MEGQ…GLPG) and 155–174 (STPS…SPTP).

This sequence belongs to the SepF family. As to quaternary structure, homodimer. Interacts with FtsZ.

It localises to the cytoplasm. Cell division protein that is part of the divisome complex and is recruited early to the Z-ring. Probably stimulates Z-ring formation, perhaps through the cross-linking of FtsZ protofilaments. Its function overlaps with FtsA. The polypeptide is Cell division protein SepF (Synechococcus sp. (strain JA-3-3Ab) (Cyanobacteria bacterium Yellowstone A-Prime)).